The chain runs to 1010 residues: Lysosomal alpha-mannosidase (1010 aa).

A signal peptide spans 1-22 (MVIKKLFILIFCLFLIINEING). The propeptide at 23–40 (KKTKINDIKKSKPKLSST) is pro I. Zn(2+) contacts are provided by His-51 and Asp-53. The N-linked (GlcNAc...) asparagine glycan is linked to Asn-68. Zn(2+) contacts are provided by Asp-173 and His-420. Asp-173 functions as the Nucleophile in the catalytic mechanism. N-linked (GlcNAc...) asparagine glycans are attached at residues Asn-480, Asn-520, Asn-528, Asn-539, Asn-623, Asn-760, Asn-784, Asn-828, Asn-954, and Asn-963. Positions 508–595 (RNEPVRIPIP…GGGKINEKVS (88 aa)) are cleaved as a propeptide — pro II.

Belongs to the glycosyl hydrolase 38 family. In terms of assembly, tetramer of equimolar amounts of 60 and 58 kDa subunits. Zn(2+) serves as cofactor. Post-translationally, first cleaved into the mature 58 kDa subunit and an intermediate 82 kDa subunit. The latter is then cleaved to its mature 60 kDa subunit form. These events occur in multiple intracellular compartments. The 60 kDa subunit may form one or more intramolecular disulfide bonds.

It localises to the lysosome. The enzyme catalyses Hydrolysis of terminal, non-reducing alpha-D-mannose residues in alpha-D-mannosides.. This is Lysosomal alpha-mannosidase (manA) from Dictyostelium discoideum (Social amoeba).